Consider the following 339-residue polypeptide: Phosphate acyltransferase (339 aa).

The protein belongs to the PlsX family. Homodimer. Probably interacts with PlsY.

It is found in the cytoplasm. It catalyses the reaction a fatty acyl-[ACP] + phosphate = an acyl phosphate + holo-[ACP]. Its pathway is lipid metabolism; phospholipid metabolism. Its function is as follows. Catalyzes the reversible formation of acyl-phosphate (acyl-PO(4)) from acyl-[acyl-carrier-protein] (acyl-ACP). This enzyme utilizes acyl-ACP as fatty acyl donor, but not acyl-CoA. This is Phosphate acyltransferase from Tolumonas auensis (strain DSM 9187 / NBRC 110442 / TA 4).